Reading from the N-terminus, the 427-residue chain is Type II methyltransferase M1.BsuMI (427 aa).

The SAM-dependent MTase C5-type domain maps to 84–427; the sequence is INIADLFSGC…SYLLALHQLR (344 aa). Cys176 is a catalytic residue.

It belongs to the class I-like SAM-binding methyltransferase superfamily. C5-methyltransferase family. Monomer. May form a complex with YdiP, also seems to be active alone.

The catalysed reaction is a 2'-deoxycytidine in DNA + S-adenosyl-L-methionine = a 5-methyl-2'-deoxycytidine in DNA + S-adenosyl-L-homocysteine + H(+). Somewhat inhibited by MgCl(2) and spermidine, strongly inhibited by MnCl(2). Functionally, a methylase, recognizes the double-stranded sequence 5'-YTCGAR-3', methylates C-3 on both strands, and protects the DNA from cleavage by the BsuMI endonuclease. The sequence is that of Type II methyltransferase M1.BsuMI (ydiO) from Bacillus subtilis (strain 168).